The primary structure comprises 246 residues: tRNA pseudouridine synthase A (246 aa).

The active-site Nucleophile is aspartate 53. Position 111 (tyrosine 111) interacts with substrate.

It belongs to the tRNA pseudouridine synthase TruA family. As to quaternary structure, homodimer.

It catalyses the reaction uridine(38/39/40) in tRNA = pseudouridine(38/39/40) in tRNA. Formation of pseudouridine at positions 38, 39 and 40 in the anticodon stem and loop of transfer RNAs. In Lysinibacillus sphaericus (strain C3-41), this protein is tRNA pseudouridine synthase A.